Consider the following 334-residue polypeptide: Tryptophan--tRNA ligase (334 aa).

ATP is bound by residues 11–13 (QPS) and 19–20 (GN). The 'HIGH' region signature appears at 12–20 (PSGELTIGN). Asp135 is a binding site for L-tryptophan. ATP contacts are provided by residues 147 to 149 (GED), Val186, and 195 to 199 (KMSKS). The 'KMSKS' region signature appears at 195–199 (KMSKS).

It belongs to the class-I aminoacyl-tRNA synthetase family. Homodimer.

It localises to the cytoplasm. It carries out the reaction tRNA(Trp) + L-tryptophan + ATP = L-tryptophyl-tRNA(Trp) + AMP + diphosphate + H(+). Its function is as follows. Catalyzes the attachment of tryptophan to tRNA(Trp). The polypeptide is Tryptophan--tRNA ligase (Salmonella typhi).